A 90-amino-acid polypeptide reads, in one-letter code: Probable Fe(2+)-trafficking protein (90 aa).

Belongs to the Fe(2+)-trafficking protein family.

Functionally, could be a mediator in iron transactions between iron acquisition and iron-requiring processes, such as synthesis and/or repair of Fe-S clusters in biosynthetic enzymes. This Aliivibrio salmonicida (strain LFI1238) (Vibrio salmonicida (strain LFI1238)) protein is Probable Fe(2+)-trafficking protein.